The chain runs to 224 residues: Prolactin-2C3 (224 aa).

Residues Met-1–Ser-29 form the signal peptide. The N-linked (GlcNAc...) asparagine glycan is linked to Asn-19. Cys-33 and Cys-40 form a disulfide bridge. N-linked (GlcNAc...) asparagine glycans are attached at residues Asn-57, Asn-75, and Asn-88. 2 disulfides stabilise this stretch: Cys-87–Cys-199 and Cys-216–Cys-224.

Belongs to the somatotropin/prolactin family. N-glycosylated and sialylated. In terms of tissue distribution, expressed in placenta and hair follicles, with highest expression levels detected in the outer root sheath and no expression detected in bulb. Expressed in placenta, skin wounds, keratinocytes and weakly in embryonic fibroblasts. Expressed in brain, cerebellum and in Neuro-2a cell line. Not detected in liver, kidney, ovary, pituitary gland and brain.

Its subcellular location is the secreted. It is found in the endoplasmic reticulum. Functionally, may have a role in embryonic development. It is likely to provide a growth stimulus to target cells in maternal and fetal tissues during the development of the embryo at mid-gestation. May play a role during wound healing and in the hair follicle cycle as a growth factor and/or an angiogenesis factor. May play a role in microvilli formation and cell proliferation of neuroblastoma cells. The polypeptide is Prolactin-2C3 (Prl2c3) (Mus musculus (Mouse)).